Here is a 272-residue protein sequence, read N- to C-terminus: HMP-PP phosphatase (272 aa).

Aspartate 8 functions as the Nucleophile in the catalytic mechanism. Residues aspartate 8, aspartate 10, and aspartate 212 each coordinate Mg(2+).

It belongs to the HAD-like hydrolase superfamily. Cof family. The cofactor is Mg(2+).

The enzyme catalyses 4-amino-2-methyl-5-(diphosphooxymethyl)pyrimidine + H2O = 4-amino-2-methyl-5-(phosphooxymethyl)pyrimidine + phosphate + H(+). Its function is as follows. Catalyzes the hydrolysis of 4-amino-2-methyl-5-hydroxymethylpyrimidine pyrophosphate (HMP-PP) to 4-amino-2-methyl-5-hydroxymethylpyrimidine phosphate (HMP-P). The polypeptide is HMP-PP phosphatase (Salmonella choleraesuis (strain SC-B67)).